The sequence spans 281 residues: Putative rRNA methyltransferase YqxC (281 aa).

The region spanning 6–67 (ERLDVLLVER…NPLRYVSRGG (62 aa)) is the S4 RNA-binding domain.

The protein belongs to the TlyA family.

The polypeptide is Putative rRNA methyltransferase YqxC (yqxC) (Bacillus subtilis (strain 168)).